Here is a 206-residue protein sequence, read N- to C-terminus: High-affinity nitrate transporter-activating protein 2.1 (206 aa).

An N-terminal signal peptide occupies residues 1-27 (MARLAGVAALSLVLVLLGAGVPRPAAA). Residues 180–200 (VAAGVFSTFSIAALAFFFVVE) form a helical membrane-spanning segment.

This sequence belongs to the NAR2 family. As to quaternary structure, heterotetramer composed of two NRT2.1, NRT2.2 or NRT2.3 and two NAR2.1. Interacts with NRT2.1, NRT2.2 and isoform 1 of NRT2.3. As to expression, expressed in epidermal cells of primary and lateral roots, root-shoot junction zone, vascular tissues of adventitious root primordia, stems and coleoptiles of germinating seeds.

It is found in the cell membrane. Acts as a dual component transporter with NTR2.1, NRT2.2 and NRT2.3. Required for high-affinity nitrate transport. Involved in the regulation of NRT2.1, NRT2.2 and NRT2.3 expression, and in both, HATS (high-affinity transport system) and LATS (low-affinity transport system) activities in plant roots. Imports nitrate with high affinity when expressed with NTR2.1, NTR2.2 or NTR2.3 in a heterologous system (Xenopus oocytes). In Oryza sativa subsp. japonica (Rice), this protein is High-affinity nitrate transporter-activating protein 2.1 (NAR2.1).